The following is a 273-amino-acid chain: 3-methyl-2-oxobutanoate hydroxymethyltransferase (273 aa).

Mg(2+)-binding residues include D53 and D92. 3-methyl-2-oxobutanoate contacts are provided by residues 53–54, D92, and K122; that span reads DS. E124 contributes to the Mg(2+) binding site. E191 (proton acceptor) is an active-site residue.

It belongs to the PanB family. Homodecamer; pentamer of dimers. Mg(2+) is required as a cofactor.

It is found in the cytoplasm. The catalysed reaction is 3-methyl-2-oxobutanoate + (6R)-5,10-methylene-5,6,7,8-tetrahydrofolate + H2O = 2-dehydropantoate + (6S)-5,6,7,8-tetrahydrofolate. Its pathway is cofactor biosynthesis; (R)-pantothenate biosynthesis; (R)-pantoate from 3-methyl-2-oxobutanoate: step 1/2. Its function is as follows. Catalyzes the reversible reaction in which hydroxymethyl group from 5,10-methylenetetrahydrofolate is transferred onto alpha-ketoisovalerate to form ketopantoate. This Parabacteroides distasonis (strain ATCC 8503 / DSM 20701 / CIP 104284 / JCM 5825 / NCTC 11152) protein is 3-methyl-2-oxobutanoate hydroxymethyltransferase.